Here is a 540-residue protein sequence, read N- to C-terminus: Chaperonin GroEL (540 aa).

ATP-binding positions include 29-32 (TLGP), 86-90 (DGTTT), G413, 476-478 (NAA), and D492.

This sequence belongs to the chaperonin (HSP60) family. In terms of assembly, forms a cylinder of 14 subunits composed of two heptameric rings stacked back-to-back. Interacts with the co-chaperonin GroES.

The protein localises to the cytoplasm. It carries out the reaction ATP + H2O + a folded polypeptide = ADP + phosphate + an unfolded polypeptide.. Its function is as follows. Together with its co-chaperonin GroES, plays an essential role in assisting protein folding. The GroEL-GroES system forms a nano-cage that allows encapsulation of the non-native substrate proteins and provides a physical environment optimized to promote and accelerate protein folding. The chain is Chaperonin GroEL from Streptococcus agalactiae.